The sequence spans 374 residues: Tetraacyldisaccharide 4'-kinase (374 aa).

43–50 lines the ATP pocket; it reads TMGGTGKT.

It belongs to the LpxK family.

It catalyses the reaction a lipid A disaccharide + ATP = a lipid IVA + ADP + H(+). It participates in glycolipid biosynthesis; lipid IV(A) biosynthesis; lipid IV(A) from (3R)-3-hydroxytetradecanoyl-[acyl-carrier-protein] and UDP-N-acetyl-alpha-D-glucosamine: step 6/6. In terms of biological role, transfers the gamma-phosphate of ATP to the 4'-position of a tetraacyldisaccharide 1-phosphate intermediate (termed DS-1-P) to form tetraacyldisaccharide 1,4'-bis-phosphate (lipid IVA). The polypeptide is Tetraacyldisaccharide 4'-kinase (Leptospira biflexa serovar Patoc (strain Patoc 1 / Ames)).